We begin with the raw amino-acid sequence, 215 residues long: MHTVKLLCVVFSCLCAVAWASSHRQPCHAPPLTSGTMKVVSTGGHDLESGEFSYDSKANKFRFVEDTAHANKTSHMDVLIHFEEGVLYEIDSKNESCKKETLQFRKHLMEIPPDATHESEIYMGSPSITEQGLRVRVWNGKFPELHAHYSMSTTSCGCLPVSGSYHGEKKDLHFSFFGVETEVDDLQVFVPPAYCEGVAFEEAPDDHSFFDLFHD.

An N-terminal signal peptide occupies residues 1–20; it reads MHTVKLLCVVFSCLCAVAWA. N-linked (GlcNAc...) asparagine glycans are attached at residues N71 and N94.

It belongs to the ependymin family. Forms disulfide-linked dimers. Different glycosylation variants are known as EPD-beta and EPD-gamma. Post-translationally, binds calcium through the terminal sialic acids. In terms of tissue distribution, EPDs are synthesized in the meninx and secreted in the cerebrospinal fluid.

It is found in the secreted. Functionally, may play a role in neural plasticity. May be involved during axon regeneration. The protein is Ependymin-1 (epd1) of Carassius auratus (Goldfish).